The following is a 248-amino-acid chain: Probable transcriptional regulatory protein Oter_1471 (248 aa).

This sequence belongs to the TACO1 family.

Its subcellular location is the cytoplasm. The polypeptide is Probable transcriptional regulatory protein Oter_1471 (Opitutus terrae (strain DSM 11246 / JCM 15787 / PB90-1)).